The chain runs to 590 residues: MSDLEDEIKVLRRKVQDGEEALQRAGQYGLQLLDEKMELHNRLEEQRTEMSNVIEALEQDKYTLQREVELKIRMLESLRSEFDLVRTQQKHQMEQQQTLLERNHAVEISDLKNKVVKMKTDLEEAQLAEKQMRHKLDQQAEALNSKTEELRALTERAHETMSSEILELQVQKMELESAMATLEQELQEAQYKDEQLHLANTTLQRQLERLTEEKEEREKEAVSCYNALEKAREANQDLQIQLEQVLQQAQDPNSKGNSLFSEVEDKRAAMERQLNSMKRNYDSLQKQHVLTKQHMHHMKMQIATLMQLQGNRADPAQLERLQFMLSDKNKEIESLMMKVRELEKEKMAVKDHHPHPPSNEGELKDETYYTDLLKMQLANSKKDAEKLKEELSMARMKALSESQRVLELERKLYGTEQALKLRHSDNMKLQVKLEELKIKYTPNEVNKAQVQKRRREKFPVPEENSASVKDETTTQDTELSKNSNEKAEEKTPSHPVEKPVVIPLQSEHPTEPNPVLSRESKSVRICEDPPVCIPDAPRSPVNDSNSKNVDQTHQSSEEEENWRTEKKRKKYQQPTHVSSQKTMANECAQQ.

The stretch at 1–401 (MSDLEDEIKV…SMARMKALSE (401 aa)) forms a coiled coil. The tract at residues 446–590 (NKAQVQKRRR…KTMANECAQQ (145 aa)) is disordered. Composition is skewed to basic and acidic residues over residues 483 to 497 (SNEK…HPVE) and 518 to 527 (RESKSVRICE). 2 stretches are compositionally biased toward polar residues: residues 541 to 554 (VNDS…QTHQ) and 572 to 590 (QQPT…CAQQ).

Belongs to the Spindly family.

The protein resides in the chromosome. Its subcellular location is the centromere. It localises to the kinetochore. Required for the localization of dynein and dynactin to the mitotic kintochore. Dynein is believed to control the initial lateral interaction between the kinetochore and spindle microtubules and to facilitate the subsequent formation of end-on kinetochore-microtubule attachments mediated by the NDC80 complex. May act as an adapter protein linking the dynein motor complex to various cargos. In Danio rerio (Zebrafish), this protein is Protein Spindly (spdl1).